Here is a 632-residue protein sequence, read N- to C-terminus: tRNA uridine 5-carboxymethylaminomethyl modification enzyme MnmG (632 aa).

FAD contacts are provided by residues 15-20 (GAGHAG), I127, and S182. Residue 276–290 (GPRYCPSIEDKIVRF) participates in NAD(+) binding. Q373 is an FAD binding site.

Belongs to the MnmG family. In terms of assembly, homodimer. Heterotetramer of two MnmE and two MnmG subunits. FAD is required as a cofactor.

The protein localises to the cytoplasm. NAD-binding protein involved in the addition of a carboxymethylaminomethyl (cmnm) group at the wobble position (U34) of certain tRNAs, forming tRNA-cmnm(5)s(2)U34. This chain is tRNA uridine 5-carboxymethylaminomethyl modification enzyme MnmG, found in Streptococcus pyogenes serotype M1.